The sequence spans 210 residues: Thymidylate kinase (210 aa).

Position 10–17 (10–17 (GLEGAGKS)) interacts with ATP.

It belongs to the thymidylate kinase family.

It carries out the reaction dTMP + ATP = dTDP + ADP. In terms of biological role, phosphorylation of dTMP to form dTDP in both de novo and salvage pathways of dTTP synthesis. In Haemophilus influenzae (strain PittEE), this protein is Thymidylate kinase.